The following is a 359-amino-acid chain: Flavonoid 8-O-methyltransferase 1 (359 aa).

Asp223 contacts S-adenosyl-L-methionine. His261 acts as the Proton acceptor in catalysis.

It belongs to the class I-like SAM-binding methyltransferase superfamily. Cation-independent O-methyltransferase family. Expressed in leaves and trichomes, especially in cv. SD and cv. EMX-1, but barely in cv. MC and cv. SW.

It catalyses the reaction an 8-hydroxyflavone + S-adenosyl-L-methionine = an 8-methoxyflavone + S-adenosyl-L-homocysteine + H(+). The catalysed reaction is 4',7,8-trihydroxyflavone + S-adenosyl-L-methionine = 4',7-dihydroxy-8-methoxyflavone + S-adenosyl-L-homocysteine + H(+). It carries out the reaction 7,8-dihydroxyflavone + S-adenosyl-L-methionine = 7-hydroxy-8-methoxyflavone + S-adenosyl-L-homocysteine + H(+). The enzyme catalyses 3',4',7,8-tetrahydroxyflavone + S-adenosyl-L-methionine = 3',4,7-trihydroxy-8-methoxyflavone + S-adenosyl-L-homocysteine + H(+). It participates in flavonoid metabolism. Strongly inhibited by gardenin B (GARD B). Its function is as follows. Cation-independent flavonoid 8-O-methyltransferase involved in the biosynthesis of polymethoxylated flavonoids natural products such as nevadensin and salvigenin, aroma compounds which contribute to the flavor of sweet basil, and exhibit pharmacological activities such as anti-allergic, anti-oxidant, antibacterial, anti-proliferative, and anti-inflammatory effects. Catalyzes S-adenosylmethionine-dependent regioselective 8-O-methylation of flavonoids; mediates likely the conversion of pilosin (PIL) to nevadensin (NEV) and of 8-hydroxysalvigenin (8-OH-SALV) to gardenin B (GARD B). Can also use 3',4',7,8-tetrahydroxyflavone as substrate. Accepts other unnatural O-diphenols including 7,8,4'-trihydroxy-flavone and 7-O-methyl-8-hydroxy-flavone, and, with a lower efficiency, 7,8-dihydroxy-flavone, as substrates. The protein is Flavonoid 8-O-methyltransferase 1 of Ocimum basilicum (Sweet basil).